A 946-amino-acid polypeptide reads, in one-letter code: Alanine--tRNA ligase, cytoplasmic (946 aa).

Residues His591, His595, Cys710, and His714 each coordinate Zn(2+).

The protein belongs to the class-II aminoacyl-tRNA synthetase family. As to quaternary structure, monomer. Zn(2+) serves as cofactor.

It localises to the cytoplasm. It catalyses the reaction tRNA(Ala) + L-alanine + ATP = L-alanyl-tRNA(Ala) + AMP + diphosphate. Its function is as follows. Catalyzes the attachment of alanine to tRNA(Ala) in a two-step reaction: alanine is first activated by ATP to form Ala-AMP and then transferred to the acceptor end of tRNA(Ala). Also edits incorrectly charged tRNA(Ala) via its editing domain. The polypeptide is Alanine--tRNA ligase, cytoplasmic (alaS) (Dictyostelium discoideum (Social amoeba)).